Reading from the N-terminus, the 102-residue chain is Large ribosomal subunit protein bL21 (102 aa).

Belongs to the bacterial ribosomal protein bL21 family. As to quaternary structure, part of the 50S ribosomal subunit. Contacts protein L20.

This protein binds to 23S rRNA in the presence of protein L20. In Staphylococcus haemolyticus (strain JCSC1435), this protein is Large ribosomal subunit protein bL21.